A 136-amino-acid polypeptide reads, in one-letter code: MKISLRAGERIYINGAVLRVDRKVSVELVNDVMFLLEGQIMQASDATTAMRQLYFIVQLMLMNPTDVRDASALYGQHHAALVAVCESREMLDGLVAIDELVGATRYFEALKRIRALFPVEQAILAGVATDIPFEAA.

It belongs to the FlbT family.

Has a post-transcriptional repressor function in flagellum biogenesis. Associates with the 5'-UTR of fljK mRNA and promotes its degradation. The chain is Probable flagellum biosynthesis repressor protein FlbT 2 from Bradyrhizobium diazoefficiens (strain JCM 10833 / BCRC 13528 / IAM 13628 / NBRC 14792 / USDA 110).